A 73-amino-acid chain; its full sequence is uncharacterized protein (73 aa).

Residues 20 to 49 (NATYNKNLELEKRLAKIRNEIPNKSKLIAT) adopt a coiled-coil conformation.

This is an uncharacterized protein from Acheta domesticus (House cricket).